Reading from the N-terminus, the 383-residue chain is Succinyl-diaminopimelate desuccinylase (383 aa).

Histidine 79 contacts Zn(2+). Aspartate 81 is an active-site residue. Residue aspartate 110 participates in Zn(2+) binding. The Proton acceptor role is filled by glutamate 141. Residues glutamate 142, glutamate 170, and histidine 355 each coordinate Zn(2+).

It belongs to the peptidase M20A family. DapE subfamily. As to quaternary structure, homodimer. It depends on Zn(2+) as a cofactor. Co(2+) serves as cofactor.

The catalysed reaction is N-succinyl-(2S,6S)-2,6-diaminopimelate + H2O = (2S,6S)-2,6-diaminopimelate + succinate. It functions in the pathway amino-acid biosynthesis; L-lysine biosynthesis via DAP pathway; LL-2,6-diaminopimelate from (S)-tetrahydrodipicolinate (succinylase route): step 3/3. Its function is as follows. Catalyzes the hydrolysis of N-succinyl-L,L-diaminopimelic acid (SDAP), forming succinate and LL-2,6-diaminopimelate (DAP), an intermediate involved in the bacterial biosynthesis of lysine and meso-diaminopimelic acid, an essential component of bacterial cell walls. The polypeptide is Succinyl-diaminopimelate desuccinylase (Helicobacter pylori (strain HPAG1)).